Reading from the N-terminus, the 236-residue chain is uncharacterized protein (236 aa).

This is an uncharacterized protein from Ureaplasma parvum serovar 3 (strain ATCC 700970).